Here is a 334-residue protein sequence, read N- to C-terminus: Tryptophan--tRNA ligase (334 aa).

Residues 11–13 (QPS) and 19–20 (GN) contribute to the ATP site. The 'HIGH' region signature appears at 12-20 (PSGELTIGN). Aspartate 135 serves as a coordination point for L-tryptophan. ATP contacts are provided by residues 147 to 149 (GED), valine 186, and 195 to 199 (KMSKS). Positions 195 to 199 (KMSKS) match the 'KMSKS' region motif.

The protein belongs to the class-I aminoacyl-tRNA synthetase family. In terms of assembly, homodimer.

It is found in the cytoplasm. The catalysed reaction is tRNA(Trp) + L-tryptophan + ATP = L-tryptophyl-tRNA(Trp) + AMP + diphosphate + H(+). Catalyzes the attachment of tryptophan to tRNA(Trp). This Shigella flexneri protein is Tryptophan--tRNA ligase.